We begin with the raw amino-acid sequence, 334 residues long: Holliday junction branch migration complex subunit RuvB (334 aa).

Positions 1-182 (MDERLVSSEA…FGVMSRLEYY (182 aa)) are large ATPase domain (RuvB-L). ATP-binding positions include leucine 21, arginine 22, glycine 63, lysine 66, threonine 67, threonine 68, 129–131 (EDF), arginine 172, tyrosine 182, and arginine 219. Threonine 67 provides a ligand contact to Mg(2+). The interval 183 to 253 (TQEELADIVT…ISQNALERLQ (71 aa)) is small ATPAse domain (RuvB-S). The head domain (RuvB-H) stretch occupies residues 256-334 (RLGLDHIDHK…HFQMEAPRYD (79 aa)). DNA contacts are provided by arginine 311 and arginine 316.

This sequence belongs to the RuvB family. In terms of assembly, homohexamer. Forms an RuvA(8)-RuvB(12)-Holliday junction (HJ) complex. HJ DNA is sandwiched between 2 RuvA tetramers; dsDNA enters through RuvA and exits via RuvB. An RuvB hexamer assembles on each DNA strand where it exits the tetramer. Each RuvB hexamer is contacted by two RuvA subunits (via domain III) on 2 adjacent RuvB subunits; this complex drives branch migration. In the full resolvosome a probable DNA-RuvA(4)-RuvB(12)-RuvC(2) complex forms which resolves the HJ. Homohexamer which interacts with RecU.

It localises to the cytoplasm. It carries out the reaction ATP + H2O = ADP + phosphate + H(+). The RuvA-RuvB-RuvC complex processes Holliday junction (HJ) DNA during genetic recombination and DNA repair, while the RuvA-RuvB complex plays an important role in the rescue of blocked DNA replication forks via replication fork reversal (RFR). RuvA specifically binds to HJ cruciform DNA, conferring on it an open structure. The RuvB hexamer acts as an ATP-dependent pump, pulling dsDNA into and through the RuvAB complex. RuvB forms 2 homohexamers on either side of HJ DNA bound by 1 or 2 RuvA tetramers; 4 subunits per hexamer contact DNA at a time. Coordinated motions by a converter formed by DNA-disengaged RuvB subunits stimulates ATP hydrolysis and nucleotide exchange. Immobilization of the converter enables RuvB to convert the ATP-contained energy into a lever motion, pulling 2 nucleotides of DNA out of the RuvA tetramer per ATP hydrolyzed, thus driving DNA branch migration. The RuvB motors rotate together with the DNA substrate, which together with the progressing nucleotide cycle form the mechanistic basis for DNA recombination by continuous HJ branch migration. Branch migration allows RuvC to scan DNA until it finds its consensus sequence, where it cleaves and resolves cruciform DNA. In Bacillus subtilis (strain 168), this protein is Holliday junction branch migration complex subunit RuvB.